Consider the following 136-residue polypeptide: MARTKQTARKSTGGKAPRKQIAAKAARKAAPSTGGVKKPHRYKPGTVALREIRRYQKSTELLIRKLPFQRLVREIAQDFKSDLRFQSSAIGALQESVEAYLVSLFEDTNLCAIHAKRVTIQSKDIQLARRLRGERS.

The interval 1-42 is disordered; the sequence is MARTKQTARKSTGGKAPRKQIAAKAARKAAPSTGGVKKPHRY. Residue Lys-5 is modified to N6,N6,N6-trimethyllysine; alternate. An N6,N6-dimethyllysine; alternate modification is found at Lys-5. 2 positions are modified to N6-methyllysine; alternate: Lys-5 and Lys-10. Lys-10 is subject to N6-acetyllysine; alternate. Ser-11 carries the phosphoserine modification. Lys-15 is subject to N6,N6-dimethyllysine; alternate. An N6-acetyllysine; alternate mark is found at Lys-15, Lys-19, Lys-24, Lys-28, and Lys-37. N6-methyllysine; alternate is present on residues Lys-19, Lys-24, Lys-28, and Lys-37. Low complexity predominate over residues 19 to 31; the sequence is KQIAAKAARKAAP. N6,N6,N6-trimethyllysine; alternate occurs at positions 28 and 37. 2 positions are modified to N6,N6-dimethyllysine; alternate: Lys-28 and Lys-37. N6-acetyllysine occurs at positions 57 and 65. Lys-80 bears the N6,N6,N6-trimethyllysine; alternate mark. N6,N6-dimethyllysine; alternate is present on Lys-80. Lys-80 is modified (N6-methyllysine; alternate).

This sequence belongs to the histone H3 family. The nucleosome is a histone octamer containing two molecules each of H2A, H2B, H3 and H4 assembled in one H3-H4 heterotetramer and two H2A-H2B heterodimers. The octamer wraps approximately 147 bp of DNA. Phosphorylated to form H3S10ph. H3S10ph promotes subsequent H3K14ac formation and is required for transcriptional activation through TBP recruitment to the promoters. Post-translationally, mono-, di- and trimethylated by the COMPASS complex to form H3K4me1/2/3. H3K4me activates gene expression by regulating transcription elongation and plays a role in telomere length maintenance. H3K4me enrichment correlates with transcription levels, and occurs in a 5' to 3' gradient with H3K4me3 enrichment at the 5'-end of genes, shifting to H3K4me2 and then H3K4me1. Methylated by SET2 to form H3K36me. H3K36me represses gene expression. Methylated by DOT1 to form H3K79me. H3K79me is required for association of SIR proteins with telomeric regions and for telomeric silencing. The COMPASS-mediated formation of H3K4me2/3 and the DOT1-mediated formation of H3K79me require H2BK123ub1. In terms of processing, acetylation of histone H3 leads to transcriptional activation. H3K14ac formation by GCN5 is promoted by H3S10ph. H3K14ac can also be formed by ESA1. H3K56ac formation occurs predominantly in newly synthesized H3 molecules during G1, S and G2/M of the cell cycle and may be involved in DNA repair.

The protein resides in the nucleus. The protein localises to the chromosome. Core component of nucleosome. Nucleosomes wrap and compact DNA into chromatin, limiting DNA accessibility to the cellular machineries which require DNA as a template. Histones thereby play a central role in transcription regulation, DNA repair, DNA replication and chromosomal stability. DNA accessibility is regulated via a complex set of post-translational modifications of histones, also called histone code, and nucleosome remodeling. The chain is Histone H3 (HHT1) from Coccidioides immitis (strain RS) (Valley fever fungus).